Here is a 306-residue protein sequence, read N- to C-terminus: Ornithine carbamoyltransferase (306 aa).

Carbamoyl phosphate contacts are provided by residues 51-54 (STRT), glutamine 78, arginine 102, and 129-132 (HPVQ). L-ornithine-binding positions include asparagine 157, aspartate 221, and 225-226 (SM). Residues 261–262 (CL) and arginine 289 contribute to the carbamoyl phosphate site.

Belongs to the aspartate/ornithine carbamoyltransferase superfamily. OTCase family.

The protein localises to the cytoplasm. It catalyses the reaction carbamoyl phosphate + L-ornithine = L-citrulline + phosphate + H(+). It participates in amino-acid biosynthesis; L-arginine biosynthesis; L-arginine from L-ornithine and carbamoyl phosphate: step 1/3. Reversibly catalyzes the transfer of the carbamoyl group from carbamoyl phosphate (CP) to the N(epsilon) atom of ornithine (ORN) to produce L-citrulline. This is Ornithine carbamoyltransferase from Campylobacter hominis (strain ATCC BAA-381 / DSM 21671 / CCUG 45161 / LMG 19568 / NCTC 13146 / CH001A).